The following is a 353-amino-acid chain: Thiamine-phosphate synthase (353 aa).

The segment at 1 to 128 (MKSMPFAPIA…AASAAAIRYG (128 aa)) is unknown. The interval 129-353 (LYDLEVTVLQ…TSLQLLEALR (225 aa)) is thiamine-phosphate synthase. 4-amino-2-methyl-5-(diphosphooxymethyl)pyrimidine-binding positions include 185–189 (QYRNK) and Asn-217. Mg(2+) contacts are provided by Asp-218 and Asp-237. Residue Ser-256 coordinates 4-amino-2-methyl-5-(diphosphooxymethyl)pyrimidine. 282-284 (TAT) serves as a coordination point for 2-[(2R,5Z)-2-carboxy-4-methylthiazol-5(2H)-ylidene]ethyl phosphate. A 4-amino-2-methyl-5-(diphosphooxymethyl)pyrimidine-binding site is contributed by Lys-285. Gly-312 lines the 2-[(2R,5Z)-2-carboxy-4-methylthiazol-5(2H)-ylidene]ethyl phosphate pocket.

The protein belongs to the thiamine-phosphate synthase family. Requires Mg(2+) as cofactor.

The catalysed reaction is 2-[(2R,5Z)-2-carboxy-4-methylthiazol-5(2H)-ylidene]ethyl phosphate + 4-amino-2-methyl-5-(diphosphooxymethyl)pyrimidine + 2 H(+) = thiamine phosphate + CO2 + diphosphate. The enzyme catalyses 2-(2-carboxy-4-methylthiazol-5-yl)ethyl phosphate + 4-amino-2-methyl-5-(diphosphooxymethyl)pyrimidine + 2 H(+) = thiamine phosphate + CO2 + diphosphate. It carries out the reaction 4-methyl-5-(2-phosphooxyethyl)-thiazole + 4-amino-2-methyl-5-(diphosphooxymethyl)pyrimidine + H(+) = thiamine phosphate + diphosphate. The protein operates within cofactor biosynthesis; thiamine diphosphate biosynthesis; thiamine phosphate from 4-amino-2-methyl-5-diphosphomethylpyrimidine and 4-methyl-5-(2-phosphoethyl)-thiazole: step 1/1. Its function is as follows. Condenses 4-methyl-5-(beta-hydroxyethyl)thiazole monophosphate (THZ-P) and 2-methyl-4-amino-5-hydroxymethyl pyrimidine pyrophosphate (HMP-PP) to form thiamine monophosphate (TMP). In Prochlorococcus marinus (strain MIT 9313), this protein is Thiamine-phosphate synthase.